A 308-amino-acid polypeptide reads, in one-letter code: uncharacterized protein (308 aa).

Residues 11–87 form the S4 RNA-binding domain; the sequence is KRLDSLLASL…LKLEVLFEDK (77 aa). Aspartate 131 is a catalytic residue.

Belongs to the pseudouridine synthase RluA family.

It carries out the reaction a uridine in RNA = a pseudouridine in RNA. This is an uncharacterized protein from Mycoplasma genitalium (strain ATCC 33530 / DSM 19775 / NCTC 10195 / G37) (Mycoplasmoides genitalium).